We begin with the raw amino-acid sequence, 291 residues long: Small ribosomal subunit biogenesis GTPase RsgA (291 aa).

One can recognise a CP-type G domain in the interval 63-221 (KNELKRPPVS…IADTPGFSAL (159 aa)). GTP-binding positions include 112-115 (TKKD) and 164-172 (GQSGVGKST). Zn(2+) contacts are provided by C245, C250, H252, and C258.

This sequence belongs to the TRAFAC class YlqF/YawG GTPase family. RsgA subfamily. As to quaternary structure, monomer. Associates with 30S ribosomal subunit, binds 16S rRNA. The cofactor is Zn(2+).

The protein resides in the cytoplasm. Its function is as follows. One of several proteins that assist in the late maturation steps of the functional core of the 30S ribosomal subunit. Helps release RbfA from mature subunits. May play a role in the assembly of ribosomal proteins into the subunit. Circularly permuted GTPase that catalyzes slow GTP hydrolysis, GTPase activity is stimulated by the 30S ribosomal subunit. The chain is Small ribosomal subunit biogenesis GTPase RsgA from Staphylococcus aureus (strain Mu50 / ATCC 700699).